Here is an 819-residue protein sequence, read N- to C-terminus: MSSLDEDEEDFEMLDTENLQFMGKKMFGKQAGEDESDDFAIGGSTPTNKLKFYPYSNNKLTRSTGTLNLSLSNTALSEANSKFLGKIEEEEEEEEEGKDEESVDSRIKRWSPFHENESVTTPITKRSAEKTNSPISLKQWNQRWFPKNDARTENTSSSSSYSVAKPNQSAFTSSGLVSKMSMDTSLYPAKLRIPETPVKKSPLVEGRDHKHVHLSSSKNASSSLSVSPLNFVEDNNLQEDLLFSDSPSSKALPSIHVPTIDSSPLSEAKYHAHDRHNNQTNILSPTNSLVTNSSPQTLHSNKFKKIKRARNSVILKNRELTNSLQQFKDDLYGTDENFPPPIIISSHHSTRKNPQPYQFRGRYDNDTDEEISTPTRRKSIIGATSQTHRESRPLSLSSAIVTNTTSAETHSISSTDSSPLNSKRRLISSNKLSANPDSHLFEKFTNVHSIGKGQFSTVYQVTFAQTNKKYAIKAIKPNKYNSLKRILLEIKILNEVTNQITMDQEGKEYIIDYISSWKFQNSYYIMTELCENGNLDGFLQEQVIAKKKRLEDWRIWKIIVELSLALRFIHDSCHIVHLDLKPANVMITFEGNLKLGDFGMATHLPLEDKSFENEGDREYIAPEIISDCTYDYKADIFSLGLMIVEIAANVVLPDNGNAWHKLRSGDLSDAGRLSSTDIHSESLFSDITKVDTNDLFDFERDNISGNSNNAGTSTVHNNSNINNPNMNNGNDNNNVNTAATKNRLILHKSSKIPAWVPKFLIDGESLERIVRWMIEPNYERRPTANQILQTEECLYVEMTRNAGAIIQEDDFGPKPKFFI.

Position 36 is a phosphoserine; by CDC5 (Ser36). Thr45 is subject to Phosphothreonine; by CDC28. Ser56 and Ser63 each carry phosphoserine; by CDC28. Ser70 carries the post-translational modification Phosphoserine. The residue at position 74 (Thr74) is a Phosphothreonine; by CDC28. The segment at 86–105 is disordered; sequence KIEEEEEEEEEGKDEESVDS. The segment covering 88 to 102 has biased composition (acidic residues); the sequence is EEEEEEEEEGKDEES. Ser102 bears the Phosphoserine; by CDC5 mark. Ser105 is subject to Phosphoserine; by CDC28. At Ser111 the chain carries Phosphoserine; by CDC5, CDC28 and CLA4. The tract at residues 117-168 is disordered; that stretch reads ESVTTPITKRSAEKTNSPISLKQWNQRWFPKNDARTENTSSSSSYSVAKPNQ. Ser118 bears the Phosphoserine; by CDC5 mark. The span at 118–142 shows a compositional bias: polar residues; it reads SVTTPITKRSAEKTNSPISLKQWNQ. 2 positions are modified to phosphothreonine; by CDC28: Thr121 and Thr124. The residue at position 127 (Ser127) is a Phosphoserine; by CDC28. Phosphothreonine; by CDC5 is present on Thr131. The residue at position 133 (Ser133) is a Phosphoserine; by CDC28. At Ser136 the chain carries Phosphoserine; by CDC28 and CLA4. Phosphoserine; by CDC5 occurs at positions 156 and 169. A Phosphothreonine; by CDC28 modification is found at Thr196. A Phosphoserine; by CDC28 modification is found at Ser201. A phosphoserine; by CDC5 mark is found at Ser225 and Ser254. Phosphoserine is present on Ser262. Phosphoserine; by CDC28 occurs at positions 263 and 266. Positions 278–297 are disordered; that stretch reads NQTNILSPTNSLVTNSSPQT. A Phosphothreonine; by CDC5 modification is found at Thr280. Ser284 and Ser294 each carry phosphoserine. Ser312 carries the phosphoserine; by CLA4 modification. Positions 341–395 are disordered; it reads PIIISSHHSTRKNPQPYQFRGRYDNDTDEEISTPTRRKSIIGATSQTHRESRPLS. Position 345 is a phosphoserine (Ser345). A phosphothreonine; by CDC28 mark is found at Thr367 and Thr373. Ser379 carries the post-translational modification Phosphoserine; by CDC5 and CLA4. Thr384 bears the Phosphothreonine; by CDC28 mark. Residues Ser395 and Ser438 each carry the phosphoserine; by CDC5 and CLA4 modification. Residues 444 to 794 enclose the Protein kinase domain; sequence FTNVHSIGKG…NQILQTEECL (351 aa). ATP-binding positions include 450–458 and Lys473; that span reads IGKGQFSTV. Catalysis depends on Asp579, which acts as the Proton acceptor. Mg(2+)-binding residues include Asn584 and Asp597. Ser610 carries the phosphoserine; by CDC5 modification. Thr629 is modified (phosphothreonine; by CDC5). Thr688 carries the phosphothreonine; by CDC5 and CLA4 modification. Phosphothreonine is present on Thr692. The segment covering 707-716 has biased composition (polar residues); it reads SNNAGTSTVH. Positions 707 to 736 are disordered; that stretch reads SNNAGTSTVHNNSNINNPNMNNGNDNNNVN. Positions 717–736 are enriched in low complexity; that stretch reads NNSNINNPNMNNGNDNNNVN. Lys741 participates in a covalent cross-link: Glycyl lysine isopeptide (Lys-Gly) (interchain with G-Cter in ubiquitin).

The protein belongs to the protein kinase superfamily. Ser/Thr protein kinase family. WEE1 subfamily. As to quaternary structure, interacts with CLB2-CDC28. Partial hyperphosphorylation of SWE1 by CLB2-CDC28 stabilizes the ternary complex of SWE1 and CLB2-CDC28 and stimulates kinase activity of SWE1 in a positive feedback loop, maintaining CLB2-CDC28 in the tyrosine-phosphorylated state. Fully hyperphosphorylated SWE1 dissociates from CLB2-CDC28. Interacts with HSL7, KCC4 and MET30. In terms of processing, ubiquitinated by the SCF(MET30) complex, leading to its degradation by the proteasome. Phosphorylated progressively by CLA4, CLB2-CDC28 and CDC5. CLA4-dependent phosphorylation occurs in late S phase, followed by phosphorylation by CLB2-CDC28 in early G2, when the levels of mitotic CLB2 increases. This phosphorylation is critical for triggering subsequent SWE1-CDC5 interaction and CDC5-dependent phosphorylation. The resulting cumulative hyperphosphorylation down-regulates SWE1 by targeting it for ubiquitin-mediated degradation. This stepwise phosphorylation is thought to be a mechanism to integrate the different checkpoint requirements before entry into mitosis.

The protein resides in the bud neck. It is found in the nucleus. It carries out the reaction L-seryl-[protein] + ATP = O-phospho-L-seryl-[protein] + ADP + H(+). The enzyme catalyses L-threonyl-[protein] + ATP = O-phospho-L-threonyl-[protein] + ADP + H(+). In terms of biological role, protein kinase that acts as a negative regulator of entry into mitosis (G2 to M transition) by phosphorylating and inhibiting the mitosis-promoting cyclin B-bound CDC28 at 'Tyr-19'. SWE1-mediated inhibition of CDC28 acts in a cell size or morphogenesis checkpoint to delay mitosis in response to defects in growth, actin organization or bud formation. Inhibits the activity of B-type cyclins in replication initiation strongly for CLB2, moderately for CLB3 and CLB4, and there is no apparent inhibition for CLB5 and CLB6, correlating with the normal expression timing of those cyclins. Hyperphosphorylation and degradation of SWE1 when all checkpoint requirement are met releases CLB2-CDC28 from inhibition and allows for progression through the cell cycle. SWE1-dependent CDC28 phosphorylation is also required for pachytene arrest upon activation of the recombination checkpoint during meiosis. Also involved in the regulation of nitrogen starvation- and short chain alcohol-induced filamentous growth, or filamentous differentiation in response to slowed DNA synthesis. Can act both on serines and on tyrosines. This chain is Mitosis inhibitor protein kinase SWE1 (SWE1), found in Saccharomyces cerevisiae (strain ATCC 204508 / S288c) (Baker's yeast).